Here is a 417-residue protein sequence, read N- to C-terminus: Creatine kinase U-type, mitochondrial (417 aa).

A mitochondrion-targeting transit peptide spans 1-39; the sequence is MAGPFSRLLSARPGLRLLALAGAGSLAAGFLLRPEPVRA. Residues 40-64 form a cardiolipin-binding region; sequence ASERRRLYPPSAEYPDLRKHNNCMA. One can recognise a Phosphagen kinase N-terminal domain in the interval 45-131; it reads RLYPPSAEYP…FDPVIQERHN (87 aa). S151 is subject to Phosphoserine. Positions 158–400 constitute a Phosphagen kinase C-terminal domain; the sequence is YVLSSRVRTG…NYLIDCERRL (243 aa). ATP is bound at residue 161–165; sequence SSRVR. Residue S196 is modified to Phosphoserine. T213 bears the Phosphothreonine mark. H224 serves as a coordination point for ATP. A Phosphoserine modification is found at S232. ATP contacts are provided by residues R269, R325, 353–358, and D368; that span reads RGTGGV. T355 bears the Phosphothreonine mark.

It belongs to the ATP:guanido phosphotransferase family. As to quaternary structure, exists as an octamer composed of four MTCK homodimers.

The protein localises to the mitochondrion inner membrane. The enzyme catalyses creatine + ATP = N-phosphocreatine + ADP + H(+). Functionally, reversibly catalyzes the transfer of phosphate between ATP and various phosphogens (e.g. creatine phosphate). Creatine kinase isoenzymes play a central role in energy transduction in tissues with large, fluctuating energy demands, such as skeletal muscle, heart, brain and spermatozoa. The polypeptide is Creatine kinase U-type, mitochondrial (CKMT1A) (Homo sapiens (Human)).